A 200-amino-acid chain; its full sequence is Methylthioribulose-1-phosphate dehydratase-like protein (200 aa).

It belongs to the aldolase class II family. MtnB subfamily.

The sequence is that of Methylthioribulose-1-phosphate dehydratase-like protein from Schizosaccharomyces pombe (strain 972 / ATCC 24843) (Fission yeast).